The sequence spans 532 residues: Cytochrome P450 714B2 (532 aa).

Residues 1–2 lie on the Lumenal side of the membrane; the sequence is ME. A helical; Signal-anchor for type III membrane protein membrane pass occupies residues 3 to 23; it reads VGMVVVVAAKVLVSLWCVGAC. Over 24 to 532 the chain is Cytoplasmic; it reads CLAAYLYRVV…LTRVQGAYRH (509 aa). Position 474 (Cys-474) interacts with heme.

It belongs to the cytochrome P450 family. Requires heme as cofactor. As to expression, highly expressed in shoot, spikelet and uppermost internode. Detected in roots, leaves and anthers.

Its subcellular location is the membrane. Catalyzes the 13-hydroxylation of gibberellins (GAs). Determines the ratio of GA4 and GA1. Converts GA12 into GA53. In Oryza sativa subsp. japonica (Rice), this protein is Cytochrome P450 714B2 (CYP714B2).